The following is a 111-amino-acid chain: Ig kappa chain V-III region CBPC 101 (111 aa).

Residues D1 to C23 are framework-1. A disulfide bond links C23 and C92. The tract at residues K24–N38 is complementarity-determining-1. The segment at W39 to Y53 is framework-2. A complementarity-determining-2 region spans residues A54 to S60. Residues G61–C92 form a framework-3 region. A complementarity-determining-3 region spans residues Q93–T101. The segment at F102–K111 is framework-4.

The polypeptide is Ig kappa chain V-III region CBPC 101 (Mus musculus (Mouse)).